The primary structure comprises 151 residues: UPF0178 protein Hhal_1913 (151 aa).

It belongs to the UPF0178 family.

This is UPF0178 protein Hhal_1913 from Halorhodospira halophila (strain DSM 244 / SL1) (Ectothiorhodospira halophila (strain DSM 244 / SL1)).